Here is a 560-residue protein sequence, read N- to C-terminus: Chaperonin GroEL 2 (560 aa).

ATP-binding positions include Thr-29–Pro-32, Asp-86–Thr-90, Gly-413, Asn-478–Ala-480, and Asp-494.

Belongs to the chaperonin (HSP60) family. In terms of assembly, forms a cylinder of 14 subunits composed of two heptameric rings stacked back-to-back. Interacts with the co-chaperonin GroES.

It is found in the cytoplasm. It catalyses the reaction ATP + H2O + a folded polypeptide = ADP + phosphate + an unfolded polypeptide.. In terms of biological role, together with its co-chaperonin GroES, plays an essential role in assisting protein folding. The GroEL-GroES system forms a nano-cage that allows encapsulation of the non-native substrate proteins and provides a physical environment optimized to promote and accelerate protein folding. The chain is Chaperonin GroEL 2 from Nostoc sp. (strain PCC 7120 / SAG 25.82 / UTEX 2576).